Consider the following 297-residue polypeptide: Protein muscleblind (297 aa).

C3H1-type zinc fingers lie at residues 18 to 46 and 52 to 80; these read WLQL…HPPA and NGKV…HPPQ.

The protein belongs to the muscleblind family. Expressed in embryonic muscle cells.

The protein localises to the nucleus. Functionally, required for terminal differentiation of photoreceptor cells. Vital for embryonic development. This Drosophila melanogaster (Fruit fly) protein is Protein muscleblind (mbl).